We begin with the raw amino-acid sequence, 278 residues long: Probable endonuclease 4 (278 aa).

Residues His-70, His-108, Glu-143, Asp-176, His-179, His-210, Asp-223, His-225, and Glu-255 each contribute to the Zn(2+) site.

It belongs to the AP endonuclease 2 family. The cofactor is Zn(2+).

The catalysed reaction is Endonucleolytic cleavage to 5'-phosphooligonucleotide end-products.. In terms of biological role, endonuclease IV plays a role in DNA repair. It cleaves phosphodiester bonds at apurinic or apyrimidinic (AP) sites, generating a 3'-hydroxyl group and a 5'-terminal sugar phosphate. The chain is Probable endonuclease 4 from Mycoplasmopsis agalactiae (strain NCTC 10123 / CIP 59.7 / PG2) (Mycoplasma agalactiae).